Reading from the N-terminus, the 108-residue chain is Ferredoxin, plant-type (108 aa).

The region spanning 5 to 96 (FEITVQPGGE…DLCIERYSKP (92 aa)) is the 2Fe-2S ferredoxin-type domain. The [2Fe-2S] cluster site is built by cysteine 40, cysteine 45, cysteine 48, and cysteine 80.

This sequence belongs to the 2Fe2S plant-type ferredoxin family.

Its pathway is aromatic compound metabolism; catechol degradation. In terms of biological role, ferredoxins are iron-sulfur proteins that transfer electrons in a wide variety of metabolic reactions. The chain is Ferredoxin, plant-type (nahT) from Pseudomonas putida (Arthrobacter siderocapsulatus).